The chain runs to 291 residues: Taste receptor type 2 member 16 (291 aa).

M1 is a topological domain (extracellular). A helical transmembrane segment spans residues 2-22; the sequence is IPIQLTVFFMIIYVLESLTII. Topologically, residues 23 to 41 are cytoplasmic; that stretch reads VQSSLIVAVLGREWLQVRR. The helical transmembrane segment at 42-62 threads the bilayer; the sequence is LMPVDMILISLGISRFCLQWA. The Extracellular portion of the chain corresponds to 63 to 84; sequence SMLNNFCSYFNLNYVLCNLTIT. A glycan (N-linked (GlcNAc...) asparagine) is linked at N80. The chain crosses the membrane as a helical span at residues 85–105; that stretch reads WEFFNILTFWLNSLLTVFYCI. Topologically, residues 106–125 are cytoplasmic; the sequence is KVSSFTHHIFLWLRWRILRL. A helical transmembrane segment spans residues 126-146; it reads FPWILLGSLMITCVTIIPSAI. The Extracellular segment spans residues 147–182; it reads GNYIQIQLLTMEHLPRNSTVTDKLENFHQYQFQAHT. N163 is a glycosylation site (N-linked (GlcNAc...) asparagine). The helical transmembrane segment at 183–203 threads the bilayer; sequence VALVIPFILFLASTIFLMASL. Residues 204-228 are Cytoplasmic-facing; the sequence is TKQIQHHSTGHCNPSMKARFTALRS. A helical transmembrane segment spans residues 229 to 249; the sequence is LAVLFIVFTSYFLTILITIIG. Residues 250–257 lie on the Extracellular side of the membrane; sequence TLFDKRCW. Residues 258-278 traverse the membrane as a helical segment; sequence LWVWEAFVYAFILMHSTSLML. At 279–291 the chain is on the cytoplasmic side; sequence SSPTLKRILKGKC.

Belongs to the G-protein coupled receptor T2R family. Interacts with RTP3 and RTP4. As to expression, expressed in a subset of gustducin-positive taste receptor cells of the tongue. Expressed in circumvallate papillae and testis.

The protein resides in the cell membrane. Its function is as follows. Gustducin-coupled receptor implicated in the perception of bitter compounds in the oral cavity and the gastrointestinal tract. Signals through PLCB2 and the calcium-regulated cation channel TRPM5. In Homo sapiens (Human), this protein is Taste receptor type 2 member 16 (TAS2R16).